The primary structure comprises 356 residues: D-xylulose reductase (356 aa).

Cys44, His69, and Glu155 together coordinate Zn(2+). Residue 179–184 coordinates NAD(+); it reads GAGPIG.

It belongs to the zinc-containing alcohol dehydrogenase family. It depends on Zn(2+) as a cofactor.

It catalyses the reaction xylitol + NAD(+) = D-xylulose + NADH + H(+). It functions in the pathway carbohydrate degradation; L-arabinose degradation via L-arabinitol; D-xylulose 5-phosphate from L-arabinose (fungal route): step 4/5. In Saccharomyces cerevisiae (strain ATCC 204508 / S288c) (Baker's yeast), this protein is D-xylulose reductase (XYL2).